The sequence spans 202 residues: MNVLRKIVKKCRDEDTQKPSPVSAPPYDDDLWLPPPEYVPLKELTSKKNMRNFCVNGEVKACSPNGYSFRILRHILRSFNEIYSGNHRMVGLVKVVVGLALSGAPVPEGMNWVYKLRRTLIFQWADSRGPLEGEELEYSQEITWDDDTEFVGLQIRVSARQCHIQGRIWCINTNSRACQLWSDMSLQTQRSEEDKDSSLLLE.

The PPXY motif motif lies at 35–38; that stretch reads PPEY. An essential for glycoprotein binding region spans residues 115–151; it reads KLRRTLIFQWADSRGPLEGEELEYSQEITWDDDTEFV.

The protein belongs to the lyssavirus matrix protein family. In terms of assembly, homomultimer. Interacts with nucleoprotein and with the cytoplasmic domain of glycoprotein. Interacts with host ATP6V1A; this interaction plays an important role in virion uncoating after viral entry.

It localises to the virion membrane. The protein localises to the host endomembrane system. It is found in the host cytoplasm. Functionally, plays a major role in assembly, budding and uncoating of virion after membrane fusion. Completely covers the ribonucleoprotein coil and keep it in condensed bullet-shaped form. Inhibits viral transcription and stimulates replication. Plays a major role in early induction of TRAIL-mediated apoptosis in infected neurons. Inhibits the integrated stress response (ISR) in the infected cell by blocking the formation of stress granules. The protein is Matrix protein (M) of Homo sapiens (Human).